The sequence spans 275 residues: Protein unc-50 homolog (275 aa).

Residues 1–26 (MTQYSHVKYTQSPTPSVVSGYSSASR) are compositionally biased toward polar residues. A disordered region spans residues 1-39 (MTQYSHVKYTQSPTPSVVSGYSSASRLHSPLPPPANHRR). Over 1–99 (MTQYSHVKYT…TKSQFARDDP (99 aa)) the chain is Cytoplasmic. Residues 100-120 (AFLVLLVVCLCVTSLGFAYVL) form a helical membrane-spanning segment. Topologically, residues 121–129 (GLSFWQSIS) are lumenal. Residues 130–150 (FIFYVVFVDCIFVGIIIASFF) form a helical membrane-spanning segment. The Cytoplasmic portion of the chain corresponds to 151–178 (WAVTNRYLRTNSLEPDIEWGYAFDVHLN). A helical transmembrane segment spans residues 179–199 (AFFPPLMLLHFIQLFFYNWLI). Residues 200–207 (SQTWFISR) are Lumenal-facing. The chain crosses the membrane as a helical span at residues 208-228 (FLGNTFWLMGMGYYVYITFLG). Topologically, residues 229-239 (YNCIPHLKNTR) are cytoplasmic. Residues 240–260 (IILIALPIIFLLFLVVTIIGW) form a helical membrane-spanning segment. The Lumenal portion of the chain corresponds to 261 to 275 (NATISFVNFYKYRVY).

It belongs to the unc-50 family.

It is found in the golgi apparatus membrane. Required for cell surface expression of acetylcholine receptors. The polypeptide is Protein unc-50 homolog (Drosophila melanogaster (Fruit fly)).